Consider the following 324-residue polypeptide: Adenine deaminase (324 aa).

Zn(2+) is bound by residues H8, H10, and H186. The active-site Proton donor is the E189. A Zn(2+)-binding site is contributed by D267. Substrate is bound at residue D268.

It belongs to the metallo-dependent hydrolases superfamily. Adenosine and AMP deaminases family. Adenine deaminase type 2 subfamily. It depends on Zn(2+) as a cofactor.

It catalyses the reaction adenine + H2O + H(+) = hypoxanthine + NH4(+). Its function is as follows. Catalyzes the hydrolytic deamination of adenine to hypoxanthine. Plays an important role in the purine salvage pathway and in nitrogen catabolism. The chain is Adenine deaminase from Mesorhizobium japonicum (strain LMG 29417 / CECT 9101 / MAFF 303099) (Mesorhizobium loti (strain MAFF 303099)).